We begin with the raw amino-acid sequence, 322 residues long: 4-hydroxythreonine-4-phosphate dehydrogenase (322 aa).

Thr-132 is a substrate binding site. A divalent metal cation is bound by residues His-160, His-205, and His-260. Substrate contacts are provided by Lys-268, Asn-277, and Arg-286.

Belongs to the PdxA family. In terms of assembly, homodimer. It depends on Zn(2+) as a cofactor. The cofactor is Mg(2+). Co(2+) serves as cofactor.

Its subcellular location is the cytoplasm. The catalysed reaction is 4-(phosphooxy)-L-threonine + NAD(+) = 3-amino-2-oxopropyl phosphate + CO2 + NADH. It participates in cofactor biosynthesis; pyridoxine 5'-phosphate biosynthesis; pyridoxine 5'-phosphate from D-erythrose 4-phosphate: step 4/5. Functionally, catalyzes the NAD(P)-dependent oxidation of 4-(phosphooxy)-L-threonine (HTP) into 2-amino-3-oxo-4-(phosphooxy)butyric acid which spontaneously decarboxylates to form 3-amino-2-oxopropyl phosphate (AHAP). In Xanthomonas campestris pv. campestris (strain B100), this protein is 4-hydroxythreonine-4-phosphate dehydrogenase.